Consider the following 124-residue polypeptide: Small ribosomal subunit protein uS12 (124 aa).

Aspartate 89 is subject to 3-methylthioaspartic acid.

Belongs to the universal ribosomal protein uS12 family. As to quaternary structure, part of the 30S ribosomal subunit. Contacts proteins S8 and S17. May interact with IF1 in the 30S initiation complex.

With S4 and S5 plays an important role in translational accuracy. Functionally, interacts with and stabilizes bases of the 16S rRNA that are involved in tRNA selection in the A site and with the mRNA backbone. Located at the interface of the 30S and 50S subunits, it traverses the body of the 30S subunit contacting proteins on the other side and probably holding the rRNA structure together. The combined cluster of proteins S8, S12 and S17 appears to hold together the shoulder and platform of the 30S subunit. The polypeptide is Small ribosomal subunit protein uS12 (Psychrobacter sp. (strain PRwf-1)).